Consider the following 1296-residue polypeptide: Aggregation substance (1296 aa).

Positions 1–43 (MKQQTEVKKRFKMYKAKKHWVVAPILFIGVLGVVGLATDDVQA) are cleaved as a signal peptide. Disordered stretches follow at residues 48-188 (TQPG…KPAE) and 1221-1245 (HTPE…TPQA). Basic and acidic residues predominate over residues 89 to 99 (KVEEVASEKNG). Composition is skewed to polar residues over residues 100 to 117 (AEQS…QQPT) and 125 to 138 (QEQP…TNEP). Positions 160–178 (KEFETPDVDKAVDEAKKDP) are enriched in basic and acidic residues. The LPXTG sorting signal motif lies at 1261-1265 (LPQTG). The residue at position 1264 (Thr1264) is a Pentaglycyl murein peptidoglycan amidated threonine. The propeptide at 1265–1296 (GEKQNVLLTVAGSLAAMLGLAGLGFKRRKETK) is removed by sortase.

This sequence belongs to the antigen I/II family.

Its subcellular location is the secreted. It localises to the cell wall. Functionally, aggregation substance allows donor and recipient strains to form tight aggregates which allow the non-motile bacteria to maintain physical contact over a period of time sufficient to permit conjugative transfer of the sex pheromone plasmid from donor to recipient strains. The polypeptide is Aggregation substance (asa1) (Enterococcus faecalis (strain ATCC 700802 / V583)).